The primary structure comprises 258 residues: MVLIRVLANLLILQLSYAQKSSELVFGGRPCNINEHRSLVVLFNSSGFLCGGTLINQDWVVTAAHCDSENFQLLFGVHSKKILNEDEQTRDPKEKFFCPNRKNDDEVDKDIMLIKLDSSVSNSTHIAPLSLPSSPPSVGSVCRIMGWGKTIPTKEIYPDVPHCANINILDHAVCRAAYSWRTVANTTLCAGILQGGKDTCHADSGGPLICNGQVQGIVSWGGHPCGQPREPGVYTKVLDYNDWVQSIIAGNTEATCPP.

A signal peptide spans M1–A18. Residues Q19–L24 constitute a propeptide that is removed on maturation. In terms of domain architecture, Peptidase S1 spans V25–A249. 6 cysteine pairs are disulfide-bonded: C31–C163, C50–C66, C98–C256, C142–C210, C174–C189, and C200–C225. N-linked (GlcNAc...) asparagine glycosylation is present at N44. Residues H65 and D110 each act as charge relay system in the active site. Residues N122 and N185 are each glycosylated (N-linked (GlcNAc...) asparagine). The active-site Charge relay system is the S204.

This sequence belongs to the peptidase S1 family. Snake venom subfamily. In terms of assembly, monomer. In terms of tissue distribution, expressed by the venom gland.

It is found in the secreted. Inhibited by PMSF at 2 mM concentration but not by EDTA. Functionally, snake venom serine protease that may act in the hemostasis system of the prey. Has weak fibrinogen clotting activity. Possesses amidolysis activity towards S-2251 (substrate for plasmin) but has no hydrolytic activity with S-2302 (plasma kallikrein substrate) or S-2238 (thrombin substrate). The sequence is that of Snake venom serine protease 2 from Protobothrops jerdonii (Jerdon's pitviper).